A 612-amino-acid chain; its full sequence is C4-dicarboxylate transport sensor protein DctB (612 aa).

2 helical membrane passes run 23 to 43 (SLVI…YFAE) and 292 to 312 (VLLI…LLTL). A coiled-coil region spans residues 328 to 376 (KRQLEERVLERTRELENANAQLQQEVHEREQAQRELMRAQDEVVQAGKL). In terms of domain architecture, Histidine kinase spans 385–599 (SISHELNQPL…VVRLHLLPGV (215 aa)). His-388 bears the Phosphohistidine; by autocatalysis mark.

Autophosphorylated.

It is found in the cell inner membrane. The enzyme catalyses ATP + protein L-histidine = ADP + protein N-phospho-L-histidine.. In terms of biological role, member of the two-component regulatory system DctB/DctD, which regulates C4-dicarboxylate transport via regulation of expression of the dctPQM operon and dctA. DctB functions as a membrane-associated protein kinase that phosphorylates DctD in response to environmental signals. This Pseudomonas aeruginosa (strain ATCC 15692 / DSM 22644 / CIP 104116 / JCM 14847 / LMG 12228 / 1C / PRS 101 / PAO1) protein is C4-dicarboxylate transport sensor protein DctB.